A 223-amino-acid chain; its full sequence is Flagellar L-ring protein (223 aa).

Positions 1–18 are cleaved as a signal peptide; it reads MKKSLMALIVVGSFLLSA. The N-palmitoyl cysteine moiety is linked to residue Cys19. Cys19 carries the S-diacylglycerol cysteine lipid modification.

It belongs to the FlgH family. As to quaternary structure, the basal body constitutes a major portion of the flagellar organelle and consists of four rings (L,P,S, and M) mounted on a central rod.

The protein localises to the cell outer membrane. The protein resides in the bacterial flagellum basal body. Its function is as follows. Assembles around the rod to form the L-ring and probably protects the motor/basal body from shearing forces during rotation. This Herminiimonas arsenicoxydans protein is Flagellar L-ring protein.